The following is a 152-amino-acid chain: Large ribosomal subunit protein bL9 (152 aa).

This sequence belongs to the bacterial ribosomal protein bL9 family.

In terms of biological role, binds to the 23S rRNA. This is Large ribosomal subunit protein bL9 from Mycobacterium leprae (strain Br4923).